The chain runs to 799 residues: Protein scabrous (799 aa).

Residues 1–51 (MRDWQTFPDLQKKKVSRDHLNCPATMAGSNVLWPILLAVVLLQISVAFVSG) form the signal peptide. The segment at 287–316 (TRKDGSSASVEEESGSQEANQEQTGLETTA) is disordered. A glycan (N-linked (GlcNAc...) asparagine) is linked at N372. The span at 489 to 498 (LNKPHKRPHH) shows a compositional bias: basic residues. A disordered region spans residues 489–509 (LNKPHKRPHHQNVQAQMPQDD). Residues 533–737 (AIINKLPHDC…SSRMLVKRLP (205 aa)) form the Fibrinogen C-terminal domain. An intrachain disulfide couples C542 to C568. N-linked (GlcNAc...) asparagine glycans are attached at residues N587, N618, and N660. A disulfide bridge links C687 with C700. N744 and N787 each carry an N-linked (GlcNAc...) asparagine glycan.

Post-translationally, possesses five pairs of dibasic residues that may be the target of proteolytic processing.

The protein resides in the late endosome. Functionally, involved in regulation of neurogenesis. May encode a lateral inhibitor of R8 differentiation. In conjunction with Gp150, promotes Notch activation in response to Delta by regulating acquisition of insensitivity to Delta in a subset of cells. In Drosophila melanogaster (Fruit fly), this protein is Protein scabrous (sca).